The following is a 460-amino-acid chain: ATP synthase subunit beta (460 aa).

Residue 150–157 (GGAGVGKT) coordinates ATP.

It belongs to the ATPase alpha/beta chains family. As to quaternary structure, F-type ATPases have 2 components, CF(1) - the catalytic core - and CF(0) - the membrane proton channel. CF(1) has five subunits: alpha(3), beta(3), gamma(1), delta(1), epsilon(1). CF(0) has three main subunits: a(1), b(2) and c(9-12). The alpha and beta chains form an alternating ring which encloses part of the gamma chain. CF(1) is attached to CF(0) by a central stalk formed by the gamma and epsilon chains, while a peripheral stalk is formed by the delta and b chains.

It localises to the cell inner membrane. The enzyme catalyses ATP + H2O + 4 H(+)(in) = ADP + phosphate + 5 H(+)(out). Its function is as follows. Produces ATP from ADP in the presence of a proton gradient across the membrane. The catalytic sites are hosted primarily by the beta subunits. The polypeptide is ATP synthase subunit beta (Enterobacter sp. (strain 638)).